Reading from the N-terminus, the 225-residue chain is C-reactive protein (225 aa).

An N-terminal signal peptide occupies residues 1–20 (MEKLLWCFLTLVSFSNMSDQ). The region spanning 24 to 225 (HKKAFVFPKE…EVHVKPQLWP (202 aa)) is the Pentraxin (PTX) domain. Residues Cys-55 and Cys-116 are joined by a disulfide bond. 4 residues coordinate Ca(2+): Asn-80, Gln-158, Asp-159, and Gln-169.

It belongs to the pentraxin family. In terms of assembly, homopentamer. Pentraxin (or pentaxin) have a discoid arrangement of 5 non-covalently bound subunits. Interacts with FCN1; may regulate monocyte activation by FCN1. The cofactor is Ca(2+). In terms of tissue distribution, found in plasma.

It is found in the secreted. Functionally, displays several functions associated with host defense: it promotes agglutination, bacterial capsular swelling, phagocytosis and complement fixation through its calcium-dependent binding to phosphorylcholine. Can interact with DNA and histones and may scavenge nuclear material released from damaged circulating cells. The polypeptide is C-reactive protein (CRP) (Oryctolagus cuniculus (Rabbit)).